The chain runs to 876 residues: Monofunctional isopimaradiene synthase, chloroplastic (876 aa).

Residues 1 to 64 constitute a chloroplast transit peptide; the sequence is MAMPSYSSLS…YLRLGSRKII (64 aa). 5 residues coordinate Mg(2+): Asp628, Asp632, Asn772, Thr776, and Glu780. The DDXXD motif motif lies at 628–632; it reads DDLYD.

This sequence belongs to the terpene synthase family. Tpsd subfamily. Mg(2+) is required as a cofactor.

It is found in the plastid. The protein localises to the chloroplast. It carries out the reaction (+)-copalyl diphosphate = isopimara-7,15-diene + diphosphate. The protein operates within terpene metabolism; oleoresin biosynthesis. Involved in defensive oleoresin formation in conifers in response to insect attack or other injury. Involved in diterpene (C20) olefins biosynthesis. Monofunctional enzyme lacking the DXDD motif in the class II active site relevant for the cyclization of geranylgeranyl diphosphate (GGPP). Requires (+)-copalyl diphosphate ((+)-CPP) as substrate, but no activity with GGPP or ent-CPP. Isopimaradiene is the major products of the enzyme followed by sandaracopimaradiene. The protein is Monofunctional isopimaradiene synthase, chloroplastic of Pinus contorta (Shore pine).